Here is a 356-residue protein sequence, read N- to C-terminus: Aminodeoxyfutalosine deaminase (356 aa).

Zn(2+)-binding residues include His-18 and His-20. Arg-73, Glu-140, and Gly-172 together coordinate substrate. Position 199 (His-199) interacts with Zn(2+). Glu-202 functions as the Proton donor in the catalytic mechanism. A Zn(2+)-binding site is contributed by Asp-287.

It belongs to the metallo-dependent hydrolases superfamily. Adenosine and AMP deaminases family. It depends on Zn(2+) as a cofactor.

The enzyme catalyses 6-amino-6-deoxyfutalosine + H2O + H(+) = futalosine + NH4(+). It participates in quinol/quinone metabolism; menaquinone biosynthesis. In terms of biological role, catalyzes the deamination of aminodeoxyfutalosine (AFL) into futalosine (FL), a step in the biosynthesis of menaquinone (MK, vitamin K2). Is very poorly efficient on 1-(6-amino-9H-purin-9-yl)-1-deoxy-N-ethyl-beta-D-ribofuranuronamide (NECA), adenosine, 5'-methylthioadenosine, 5'-deoxyadenosine, 2'-deoxyadenosine, and AMP as substrate. The polypeptide is Aminodeoxyfutalosine deaminase (Acidothermus cellulolyticus (strain ATCC 43068 / DSM 8971 / 11B)).